The following is a 230-amino-acid chain: UPF0173 metal-dependent hydrolase TM1040_1920 (230 aa).

This sequence belongs to the UPF0173 family.

The chain is UPF0173 metal-dependent hydrolase TM1040_1920 from Ruegeria sp. (strain TM1040) (Silicibacter sp.).